The following is a 362-amino-acid chain: MTMRIFNFSPGPATLPEPVLRQAQDEMLEWNAVGASVMEISHRTVEFMELAKGIESDLRCLLGVPDDYAVLFLSGGATTQQALLPLNFAAPGQTADYVVTGHWSKTALKQASPYVNINVVADGERGGFQHIPSRAGWRLSKDAAYVHMTANETIHGVEFRQTPDVGDVPLFADFSSSIAADLIDVSKYDLIYAGAQKNLGPVGICVVIVRRTLLERTGQPRADIFTYASHAERDSMLNTPPTFNWYLLGLTVKWMLAEGGVQEFARRNQAKAQLVYQTIDQSGGFYRNGVAAAVRSRMNIPFFLPNVEQDARFAAEAKAAGLLSLKGHKALGGIRASLYNAMPLAGVQALVAFMHDFQQRYG.

L-glutamate is bound at residue arginine 43. Residues 77-78, tryptophan 103, threonine 153, aspartate 173, and glutamine 196 each bind pyridoxal 5'-phosphate; that span reads AT. Lysine 197 carries the N6-(pyridoxal phosphate)lysine modification. 238 to 239 lines the pyridoxal 5'-phosphate pocket; the sequence is NT.

The protein belongs to the class-V pyridoxal-phosphate-dependent aminotransferase family. SerC subfamily. In terms of assembly, homodimer. The cofactor is pyridoxal 5'-phosphate.

It is found in the cytoplasm. The catalysed reaction is O-phospho-L-serine + 2-oxoglutarate = 3-phosphooxypyruvate + L-glutamate. It carries out the reaction 4-(phosphooxy)-L-threonine + 2-oxoglutarate = (R)-3-hydroxy-2-oxo-4-phosphooxybutanoate + L-glutamate. It functions in the pathway amino-acid biosynthesis; L-serine biosynthesis; L-serine from 3-phospho-D-glycerate: step 2/3. Its pathway is cofactor biosynthesis; pyridoxine 5'-phosphate biosynthesis; pyridoxine 5'-phosphate from D-erythrose 4-phosphate: step 3/5. Its function is as follows. Catalyzes the reversible conversion of 3-phosphohydroxypyruvate to phosphoserine and of 3-hydroxy-2-oxo-4-phosphonooxybutanoate to phosphohydroxythreonine. This Xylella fastidiosa (strain 9a5c) protein is Phosphoserine aminotransferase.